Consider the following 209-residue polypeptide: UPF0174 protein jhp_1493 (209 aa).

It belongs to the UPF0174 family.

The sequence is that of UPF0174 protein jhp_1493 from Helicobacter pylori (strain J99 / ATCC 700824) (Campylobacter pylori J99).